The chain runs to 166 residues: Flagellar protein LafL (166 aa).

A helical membrane pass occupies residues 6–26; the sequence is MIAMFIAMIITSALVSAATIM.

It belongs to the FliL family.

It is found in the cell inner membrane. Its function is as follows. Controls the rotational direction of flagella during chemotaxis. The protein is Flagellar protein LafL (lafL) of Vibrio parahaemolyticus serotype O3:K6 (strain RIMD 2210633).